We begin with the raw amino-acid sequence, 886 residues long: Linoleate 9S-lipoxygenase 5 (886 aa).

Residues 35-180 (IEGEVVVMKK…RYRSDRVFFS (146 aa)) form the PLAT domain. The region spanning 183–886 (AYLPSETPEL…GKGIPNSVSI (704 aa)) is the Lipoxygenase domain. The interval 234 to 266 (GPDSVRPVLGGSPELPYPRRGKTGRKSTKSDPK) is disordered. Residues His-542, His-547, His-733, Asn-737, and Ile-886 each coordinate Fe cation.

Belongs to the lipoxygenase family. The cofactor is Fe cation. In terms of tissue distribution, expressed in roots.

The catalysed reaction is (9Z,12Z)-octadecadienoate + O2 = (9S)-hydroperoxy-(10E,12Z)-octadecadienoate. It carries out the reaction (9Z,12Z,15Z)-octadecatrienoate + O2 = (9S)-hydroperoxy-(10E,12Z,15Z)-octadecatrienoate. It functions in the pathway lipid metabolism; oxylipin biosynthesis. Functionally, 9S-lipoxygenase that can use linoleic acid or linolenic acid as substrates. Plant lipoxygenases may be involved in a number of diverse aspects of plant physiology including growth and development, pest resistance, and senescence or responses to wounding. Catalyzes the hydroperoxidation of lipids containing a cis,cis-1,4-pentadiene structure. Function as regulators of root development by controlling the emergence of lateral roots. 9S-lypoxygenase-derived oxylipins may play an antagonistic role to ethylene signaling in the control of responses involving oxidative stress, lipid peroxidation and plant defense. LOX5-derived oxylipins may facilitate performance of green peach aphid (Myzus persicae) on foliage. 9S-lypoxygenase-derived oxylipins are engaged during infection to control the balance between salicylic acid (SA) and jasmonate (JA) signaling to facilitate infection by the fungal pathogen Fusarium graminearum. 9S-lypoxygenase-derived oxylipins activate brassinosteroid signaling to promote cell wall-based defense and limit pathogen infection. Does not seem to contribute to the oxidation of free fatty acids during seed aging. The protein is Linoleate 9S-lipoxygenase 5 of Arabidopsis thaliana (Mouse-ear cress).